Consider the following 323-residue polypeptide: Oligodendrocyte transcription factor 2 (323 aa).

Composition is skewed to polar residues over residues 1-13 (MDSDASLVSSRPS) and 27-45 (KGSSGSAFTGGTVSSSTPS). A disordered region spans residues 1–107 (MDSDASLVSS…KKQMTEPELQ (107 aa)). Residues 76-93 (KSSSSSTSSSTSSAAASS) are compositionally biased toward low complexity. A bHLH domain is found at 108 to 162 (QLRLKINSRERKRMHDLNIAMDGLREVMPYAHGPSVRKLSKIATLLLARNYILML).

As to quaternary structure, interacts with NKX2-2. Interacts with ZNF488. As to expression, expressed in the brain, in oligodendrocytes. Strongly expressed in oligodendrogliomas, while expression is weak to moderate in astrocytomas. Expression in glioblastomas highly variable.

The protein localises to the nucleus. It localises to the cytoplasm. Its function is as follows. Required for oligodendrocyte and motor neuron specification in the spinal cord, as well as for the development of somatic motor neurons in the hindbrain. Functions together with ZNF488 to promote oligodendrocyte differentiation. Cooperates with OLIG1 to establish the pMN domain of the embryonic neural tube. Antagonist of V2 interneuron and of NKX2-2-induced V3 interneuron development. The polypeptide is Oligodendrocyte transcription factor 2 (OLIG2) (Homo sapiens (Human)).